The primary structure comprises 229 residues: Urease accessory protein UreF (229 aa).

It belongs to the UreF family. As to quaternary structure, ureD, UreF and UreG form a complex that acts as a GTP-hydrolysis-dependent molecular chaperone, activating the urease apoprotein by helping to assemble the nickel containing metallocenter of UreC. The UreE protein probably delivers the nickel.

The protein localises to the cytoplasm. Functionally, required for maturation of urease via the functional incorporation of the urease nickel metallocenter. The sequence is that of Urease accessory protein UreF from Methylobacterium radiotolerans (strain ATCC 27329 / DSM 1819 / JCM 2831 / NBRC 15690 / NCIMB 10815 / 0-1).